The chain runs to 95 residues: MSVDAATVRRIAHLARIAVTDDEVPHLQGELNAMLAFVEQLAEVDVDGVEPMTSVTPMQMKKRADGVNDGEIADHVVANAPATEDHFFLVPKVVE.

This sequence belongs to the GatC family. As to quaternary structure, heterotrimer of A, B and C subunits.

It catalyses the reaction L-glutamyl-tRNA(Gln) + L-glutamine + ATP + H2O = L-glutaminyl-tRNA(Gln) + L-glutamate + ADP + phosphate + H(+). The catalysed reaction is L-aspartyl-tRNA(Asn) + L-glutamine + ATP + H2O = L-asparaginyl-tRNA(Asn) + L-glutamate + ADP + phosphate + 2 H(+). Allows the formation of correctly charged Asn-tRNA(Asn) or Gln-tRNA(Gln) through the transamidation of misacylated Asp-tRNA(Asn) or Glu-tRNA(Gln) in organisms which lack either or both of asparaginyl-tRNA or glutaminyl-tRNA synthetases. The reaction takes place in the presence of glutamine and ATP through an activated phospho-Asp-tRNA(Asn) or phospho-Glu-tRNA(Gln). In Rhodopseudomonas palustris (strain BisB5), this protein is Aspartyl/glutamyl-tRNA(Asn/Gln) amidotransferase subunit C.